A 168-amino-acid chain; its full sequence is G/U mismatch-specific DNA glycosylase (168 aa).

This sequence belongs to the uracil-DNA glycosylase (UDG) superfamily. TDG/mug family. In terms of assembly, binds DNA as a monomer.

The protein resides in the cytoplasm. The enzyme catalyses Specifically hydrolyzes mismatched double-stranded DNA and polynucleotides, releasing free uracil.. In terms of biological role, excises ethenocytosine and uracil, which can arise by alkylation or deamination of cytosine, respectively, from the corresponding mispairs with guanine in ds-DNA. It is capable of hydrolyzing the carbon-nitrogen bond between the sugar-phosphate backbone of the DNA and the mispaired base. The complementary strand guanine functions in substrate recognition. Required for DNA damage lesion repair in stationary-phase cells. The sequence is that of G/U mismatch-specific DNA glycosylase from Salmonella gallinarum (strain 287/91 / NCTC 13346).